The following is a 243-amino-acid chain: Complement C1q tumor necrosis factor-related protein 5 (243 aa).

The N-terminal stretch at 1–15 (MRPLLALLLLGLASG) is a signal peptide. The interval 15–124 (GSPPLDDNKI…VPPPADTPLP (110 aa)) is disordered. Residues 30–95 (GQPGLPGTPG…AGPVGAIGPA (66 aa)) form the Collagen-like domain. One can recognise a C1q domain in the interval 99 to 238 (SVPPRSAFSA…GFLVYSDWHS (140 aa)).

As to quaternary structure, homotrimer (via collagen-like domain). May form higher order oligomers by supercoiling of the trimers. May interact with ERFE.

It is found in the secreted. This chain is Complement C1q tumor necrosis factor-related protein 5 (C1qtnf5), found in Rattus norvegicus (Rat).